The primary structure comprises 226 residues: Thymidylate kinase (226 aa).

16–23 (GIDGAGKT) lines the ATP pocket.

The protein belongs to the thymidylate kinase family.

The enzyme catalyses dTMP + ATP = dTDP + ADP. Phosphorylation of dTMP to form dTDP in both de novo and salvage pathways of dTTP synthesis. In Xanthomonas euvesicatoria pv. vesicatoria (strain 85-10) (Xanthomonas campestris pv. vesicatoria), this protein is Thymidylate kinase.